A 358-amino-acid polypeptide reads, in one-letter code: Methylthioribose-1-phosphate isomerase (358 aa).

Substrate contacts are provided by residues 54 to 56, Arg96, and Gln205; that span reads RGA. Asp246 functions as the Proton donor in the catalytic mechanism. Position 256-257 (256-257) interacts with substrate; sequence NK.

Belongs to the eIF-2B alpha/beta/delta subunits family. MtnA subfamily.

The catalysed reaction is 5-(methylsulfanyl)-alpha-D-ribose 1-phosphate = 5-(methylsulfanyl)-D-ribulose 1-phosphate. It participates in amino-acid biosynthesis; L-methionine biosynthesis via salvage pathway; L-methionine from S-methyl-5-thio-alpha-D-ribose 1-phosphate: step 1/6. Its function is as follows. Catalyzes the interconversion of methylthioribose-1-phosphate (MTR-1-P) into methylthioribulose-1-phosphate (MTRu-1-P). This Pseudomonas syringae pv. syringae (strain B728a) protein is Methylthioribose-1-phosphate isomerase.